Consider the following 370-residue polypeptide: Apolipoprotein A-V (370 aa).

Positions Met1 to Ala21 are cleaved as a signal peptide. Phosphoserine is present on Ser59.

Belongs to the apolipoprotein A1/A4/E family. Interacts with GPIHBP1. Interacts with SORL1; this interaction leads to APOA5 internalization and sorting either to lysosomes and degradation, or to the trans-Golgi network.

The protein localises to the secreted. Its subcellular location is the early endosome. The protein resides in the late endosome. It is found in the golgi apparatus. It localises to the trans-Golgi network. Minor apolipoprotein mainly associated with HDL and to a lesser extent with VLDL. May also be associated with chylomicrons. Important determinant of plasma triglyceride (TG) levels by both being a potent stimulator of apo-CII lipoprotein lipase (LPL) TG hydrolysis and an inhibitor of the hepatic VLDL-TG production rate (without affecting the VLDL-apoB production rate). Activates poorly lecithin:cholesterol acyltransferase (LCAT) and does not enhance efflux of cholesterol from macrophages. Binds heparin. In Acinonyx jubatus (Cheetah), this protein is Apolipoprotein A-V (APOA5).